The chain runs to 31 residues: Photosystem II reaction center protein T (31 aa).

A helical transmembrane segment spans residues 3–23 (AFTYTLLMTLGVVTLFFAVAF).

This sequence belongs to the PsbT family. As to quaternary structure, PSII is composed of 1 copy each of membrane proteins PsbA, PsbB, PsbC, PsbD, PsbE, PsbF, PsbH, PsbI, PsbJ, PsbK, PsbL, PsbM, PsbT, PsbX, PsbY, Psb30/Ycf12, peripheral proteins PsbO, CyanoQ (PsbQ), PsbU, PsbV and a large number of cofactors. It forms dimeric complexes.

Its subcellular location is the cellular thylakoid membrane. Functionally, found at the monomer-monomer interface of the photosystem II (PS II) dimer, plays a role in assembly and dimerization of PSII. PSII is a light-driven water plastoquinone oxidoreductase, using light energy to abstract electrons from H(2)O, generating a proton gradient subsequently used for ATP formation. This Prochlorococcus marinus (strain SARG / CCMP1375 / SS120) protein is Photosystem II reaction center protein T.